The following is a 254-amino-acid chain: Probable phosphatase Sbal_1472 (254 aa).

Residues histidine 8, histidine 10, histidine 16, histidine 41, glutamate 74, histidine 102, histidine 132, aspartate 193, and histidine 195 each contribute to the Zn(2+) site.

Belongs to the PHP family. It depends on Zn(2+) as a cofactor.

This is Probable phosphatase Sbal_1472 from Shewanella baltica (strain OS155 / ATCC BAA-1091).